The sequence spans 183 residues: MLRFLEVVSEHIKNLRNHIDLETVGEMIKLIDSARSIFVIGAGRSGYIAKAFAMRLMHLGYTVYVVGETVTPRITDQDVLVAISGSGETTSVVNISKKAKDIGSKLVAVTGKRDSSLAKMADVVMVVKGKMKQERDEILSQLAPLGTMFELTAMIFLDALVAEIMMQKHLTEKDLEARHAVLE.

Residues 27-170 form the SIS domain; the sequence is MIKLIDSARS…VAEIMMQKHL (144 aa).

Belongs to the SIS family. PHI subfamily.

This is an uncharacterized protein from Archaeoglobus fulgidus (strain ATCC 49558 / DSM 4304 / JCM 9628 / NBRC 100126 / VC-16).